A 190-amino-acid polypeptide reads, in one-letter code: Selenoprotein S (190 aa).

A helical membrane pass occupies residues 28-48 (SLLASYGWYILFSCVLLYIVI). A VCP/p97-interacting motif (VIM) region spans residues 78 to 90 (RQEALAAARLRMQ). The disordered stretch occupies residues 96 to 190 (QVEKHKEKQR…RRGPSSGGUS (95 aa)). Basic and acidic residues predominate over residues 97–118 (VEKHKEKQRQLEEEKRRQKIEM). The segment covering 160-174 (RGGGYNPLTGEGGGT) has biased composition (gly residues). Residue U189 is a non-standard amino acid, selenocysteine.

Belongs to the selenoprotein S family. In terms of assembly, interacts with DERL1 and (via VIM motif) with VCP, suggesting that it forms a membrane complex with DERL1 that serves as a receptor for VCP. Also interacts with DERL2, DERL3 and SELENOK. The SELENOK-SELENOS complex interacts with VCP. Interacts with CCDC47. In terms of processing, truncated SELENOS proteins produced by failed UGA/Sec decoding are ubiquitinated by the CRL2(KLHDC2) and CRL2(KLHDC3) complexes, which recognizes the glycine (Gly) at the C-terminus of truncated SELENOS proteins. Truncated SELENOS proteins produced by failed UGA/Sec decoding are also ubiquitinated by the CRL5(KLHDC1) complex.

It is found in the endoplasmic reticulum membrane. Its subcellular location is the cytoplasm. Involved in the degradation process of misfolded endoplasmic reticulum (ER) luminal proteins. Participates in the transfer of misfolded proteins from the ER to the cytosol, where they are destroyed by the proteasome in a ubiquitin-dependent manner. Probably acts by serving as a linker between DERL1, which mediates the retrotranslocation of misfolded proteins into the cytosol, and the ATPase complex VCP, which mediates the translocation and ubiquitination. The protein is Selenoprotein S of Rattus norvegicus (Rat).